The chain runs to 340 residues: GTP 3',8-cyclase (340 aa).

The region spanning Arg20–Lys246 is the Radical SAM core domain. Residue Arg29 participates in GTP binding. The [4Fe-4S] cluster site is built by Cys36 and Cys40. S-adenosyl-L-methionine is bound at residue Tyr42. Cys43 serves as a coordination point for [4Fe-4S] cluster. Residue Arg79 coordinates GTP. Gly83 contributes to the S-adenosyl-L-methionine binding site. Thr110 contributes to the GTP binding site. Ser134 is an S-adenosyl-L-methionine binding site. A GTP-binding site is contributed by Lys171. Position 205 (Met205) interacts with S-adenosyl-L-methionine. [4Fe-4S] cluster-binding residues include Cys268 and Cys271. Arg273–Arg275 lines the GTP pocket. Cys285 is a [4Fe-4S] cluster binding site.

The protein belongs to the radical SAM superfamily. MoaA family. In terms of assembly, monomer and homodimer. It depends on [4Fe-4S] cluster as a cofactor.

The enzyme catalyses GTP + AH2 + S-adenosyl-L-methionine = (8S)-3',8-cyclo-7,8-dihydroguanosine 5'-triphosphate + 5'-deoxyadenosine + L-methionine + A + H(+). Its pathway is cofactor biosynthesis; molybdopterin biosynthesis. Functionally, catalyzes the cyclization of GTP to (8S)-3',8-cyclo-7,8-dihydroguanosine 5'-triphosphate. This is GTP 3',8-cyclase from Actinobacillus pleuropneumoniae serotype 5b (strain L20).